Consider the following 260-residue polypeptide: Adenosylcobinamide-GDP ribazoletransferase (260 aa).

The next 6 membrane-spanning stretches (helical) occupy residues 40-60 (AFPFAGIVIGFIPALALLLLL), 64-84 (ADPLMAALIALSIQVLVTGAL), 117-137 (YGAIALILSLAIRAAALAVIA), 142-162 (PLTAALAIPAVAALSRGAIAW), 188-208 (QFALASAGLVAALLIWPAFGL), and 209-229 (RPLVASLLATGIAGFAFTAFI).

It belongs to the CobS family. Mg(2+) serves as cofactor.

It is found in the cell inner membrane. It catalyses the reaction alpha-ribazole + adenosylcob(III)inamide-GDP = adenosylcob(III)alamin + GMP + H(+). The enzyme catalyses alpha-ribazole 5'-phosphate + adenosylcob(III)inamide-GDP = adenosylcob(III)alamin 5'-phosphate + GMP + H(+). Its pathway is cofactor biosynthesis; adenosylcobalamin biosynthesis; adenosylcobalamin from cob(II)yrinate a,c-diamide: step 7/7. Functionally, joins adenosylcobinamide-GDP and alpha-ribazole to generate adenosylcobalamin (Ado-cobalamin). Also synthesizes adenosylcobalamin 5'-phosphate from adenosylcobinamide-GDP and alpha-ribazole 5'-phosphate. The chain is Adenosylcobinamide-GDP ribazoletransferase from Rhizobium johnstonii (strain DSM 114642 / LMG 32736 / 3841) (Rhizobium leguminosarum bv. viciae).